We begin with the raw amino-acid sequence, 319 residues long: 1-aminocyclopropane-1-carboxylate oxidase (319 aa).

The 101-residue stretch at 153–253 (PTFGTKVSNY…RMSIASFYNP (101 aa)) folds into the Fe2OG dioxygenase domain. Fe cation is bound by residues H177, D179, and H234.

It belongs to the iron/ascorbate-dependent oxidoreductase family. Fe cation serves as cofactor.

The enzyme catalyses 1-aminocyclopropane-1-carboxylate + L-ascorbate + O2 = ethene + L-dehydroascorbate + hydrogen cyanide + CO2 + 2 H2O. The protein operates within alkene biosynthesis; ethylene biosynthesis via S-adenosyl-L-methionine; ethylene from S-adenosyl-L-methionine: step 2/2. The polypeptide is 1-aminocyclopropane-1-carboxylate oxidase (ACO1) (Prunus mume (Japanese apricot)).